The following is a 224-amino-acid chain: Uracil-DNA glycosylase (224 aa).

Asp62 functions as the Proton acceptor in the catalytic mechanism.

Belongs to the uracil-DNA glycosylase (UDG) superfamily. UNG family.

It is found in the cytoplasm. It carries out the reaction Hydrolyzes single-stranded DNA or mismatched double-stranded DNA and polynucleotides, releasing free uracil.. Excises uracil residues from the DNA which can arise as a result of misincorporation of dUMP residues by DNA polymerase or due to deamination of cytosine. The polypeptide is Uracil-DNA glycosylase (Aliivibrio salmonicida (strain LFI1238) (Vibrio salmonicida (strain LFI1238))).